A 585-amino-acid polypeptide reads, in one-letter code: Aspartate--tRNA(Asp/Asn) ligase (585 aa).

E173 provides a ligand contact to L-aspartate. The segment at 197–200 (QLFK) is aspartate. An L-aspartate-binding site is contributed by R219. ATP is bound by residues 219 to 221 (RDE) and Q228. H447 lines the L-aspartate pocket. E477 serves as a coordination point for ATP. Residue R484 coordinates L-aspartate. Position 529 to 532 (529 to 532 (GFDR)) interacts with ATP.

Belongs to the class-II aminoacyl-tRNA synthetase family. Type 1 subfamily. Homodimer.

The protein resides in the cytoplasm. It catalyses the reaction tRNA(Asx) + L-aspartate + ATP = L-aspartyl-tRNA(Asx) + AMP + diphosphate. Aspartyl-tRNA synthetase with relaxed tRNA specificity since it is able to aspartylate not only its cognate tRNA(Asp) but also tRNA(Asn). Reaction proceeds in two steps: L-aspartate is first activated by ATP to form Asp-AMP and then transferred to the acceptor end of tRNA(Asp/Asn). The protein is Aspartate--tRNA(Asp/Asn) ligase of Campylobacter concisus (strain 13826).